Reading from the N-terminus, the 120-residue chain is 5-hydroxyisourate hydrolase 2 (120 aa).

Substrate is bound by residues histidine 10, arginine 48, and tyrosine 117.

Belongs to the transthyretin family. 5-hydroxyisourate hydrolase subfamily. As to quaternary structure, homotetramer.

It carries out the reaction 5-hydroxyisourate + H2O = 5-hydroxy-2-oxo-4-ureido-2,5-dihydro-1H-imidazole-5-carboxylate + H(+). Catalyzes the hydrolysis of 5-hydroxyisourate (HIU) to 2-oxo-4-hydroxy-4-carboxy-5-ureidoimidazoline (OHCU). This is 5-hydroxyisourate hydrolase 2 from Rhizobium meliloti (strain 1021) (Ensifer meliloti).